Consider the following 795-residue polypeptide: Delta-1-pyrroline-5-carboxylate synthase (795 aa).

The segment at 1-361 is glutamate 5-kinase; it reads MLRHMHRSGV…FFSEVKPAGP (361 aa). Substrate contacts are provided by Ser-117, Asp-223, and Asn-246. Residues 266–267 and 305–311 contribute to the ATP site; these read SD and LGGMEAK. An N6-succinyllysine mark is found at Lys-311, Lys-347, and Lys-550. A gamma-glutamyl phosphate reductase region spans residues 362–795; the sequence is TVEQQGEMAR…NLPVPQRNFS (434 aa).

It in the N-terminal section; belongs to the glutamate 5-kinase family. In the C-terminal section; belongs to the gamma-glutamyl phosphate reductase family. In terms of assembly, can form homodimers/multimers.

The protein resides in the mitochondrion matrix. It catalyses the reaction L-glutamate + ATP = L-glutamyl 5-phosphate + ADP. The catalysed reaction is L-glutamate 5-semialdehyde + phosphate + NADP(+) = L-glutamyl 5-phosphate + NADPH + H(+). Its pathway is amino-acid biosynthesis; L-proline biosynthesis; L-glutamate 5-semialdehyde from L-glutamate: step 1/2. It functions in the pathway amino-acid biosynthesis; L-proline biosynthesis; L-glutamate 5-semialdehyde from L-glutamate: step 2/2. Its activity is regulated as follows. Isoform Short: Inhibited by L-ornithine with a Ki of approximately 0.25 mm. Isoform Long: Insensitive to ornithine inhibition. Thus, the two amino acid insert in the long isoform abolishes feedback inhibition of P5CS activity by L-ornithine. In terms of biological role, bifunctional enzyme that converts glutamate to glutamate 5-semialdehyde, an intermediate in the biosynthesis of proline, ornithine and arginine. This is Delta-1-pyrroline-5-carboxylate synthase (Aldh18a1) from Mus musculus (Mouse).